The chain runs to 819 residues: Kinesin-like protein KIN-13A (819 aa).

Residues 150–178 (EPFEPSPFIPKEMDEDDDDMLPGSQPGPS) form a disordered region. The Kinesin motor domain occupies 199–535 (KIKVVVRKRP…LRYADRVKSL (337 aa)). ATP is bound at residue 289–296 (GQTGSGKT). The tract at residues 534–729 (SLSKGSNTRK…QSEKESSCDD (196 aa)) is disordered. Residues 550–562 (TIPSSKDSSSAPS) show a composition bias toward low complexity. Composition is skewed to basic and acidic residues over residues 577–589 (QEKR…RKAA) and 614–631 (RGKE…ERVD). A compositionally biased stretch (polar residues) spans 632–652 (LNSSRISYNSKPQSVQSSANL). The span at 669–686 (YRDDKPERQSNYAKKDSG) shows a compositional bias: basic and acidic residues. Positions 697–719 (QQAKQLQQQQRPTSASASQNSSR) are enriched in low complexity. A coiled-coil region spans residues 736 to 767 (LEEEEALIAAHRKEIENTMEIVREEMNLLAEV).

Belongs to the TRAFAC class myosin-kinesin ATPase superfamily. Kinesin family. KIN-13 subfamily. In terms of tissue distribution, ubiquitous.

The protein resides in the microsome. The polypeptide is Kinesin-like protein KIN-13A (Oryza sativa subsp. japonica (Rice)).